A 559-amino-acid chain; its full sequence is Putative helicase 22 (559 aa).

The Helicase ATP-binding domain occupies 186 to 347 (VSDVNVIGNG…EIMGLLGKIS (162 aa)). 199-206 (APTGSGKS) is an ATP binding site. A DEAH box motif is present at residues 300-303 (DEAH). One can recognise a Helicase C-terminal domain in the interval 410–552 (TNKQIISKIK…KMNFIENEYN (143 aa)).

The polypeptide is Putative helicase 22 (SIFV0022) (Sulfolobus islandicus filamentous virus (isolate Iceland/Hveragerdi) (SIFV)).